The sequence spans 151 residues: 6,7-dimethyl-8-ribityllumazine synthase (151 aa).

Residues phenylalanine 18, 49–51, and 74–76 contribute to the 5-amino-6-(D-ribitylamino)uracil site; these read ALE and CVI. Residue 79–80 participates in (2S)-2-hydroxy-3-oxobutyl phosphate binding; it reads ET. Histidine 82 acts as the Proton donor in catalysis. A 5-amino-6-(D-ribitylamino)uracil-binding site is contributed by asparagine 107. Arginine 121 contributes to the (2S)-2-hydroxy-3-oxobutyl phosphate binding site.

Belongs to the DMRL synthase family.

It catalyses the reaction (2S)-2-hydroxy-3-oxobutyl phosphate + 5-amino-6-(D-ribitylamino)uracil = 6,7-dimethyl-8-(1-D-ribityl)lumazine + phosphate + 2 H2O + H(+). It functions in the pathway cofactor biosynthesis; riboflavin biosynthesis; riboflavin from 2-hydroxy-3-oxobutyl phosphate and 5-amino-6-(D-ribitylamino)uracil: step 1/2. Functionally, catalyzes the formation of 6,7-dimethyl-8-ribityllumazine by condensation of 5-amino-6-(D-ribitylamino)uracil with 3,4-dihydroxy-2-butanone 4-phosphate. This is the penultimate step in the biosynthesis of riboflavin. The sequence is that of 6,7-dimethyl-8-ribityllumazine synthase from Bartonella tribocorum (strain CIP 105476 / IBS 506).